We begin with the raw amino-acid sequence, 126 residues long: Probable DNA-directed RNA polymerase II subunit RPB11 (126 aa).

The protein belongs to the archaeal Rpo11/eukaryotic RPB11/RPC19 RNA polymerase subunit family. As to quaternary structure, component of the RNA polymerase II (Pol II) complex consisting of 12 subunits.

The protein localises to the nucleus. Functionally, DNA-dependent RNA polymerase catalyzes the transcription of DNA into RNA using the four ribonucleoside triphosphates as substrates. Component of RNA polymerase II which synthesizes mRNA precursors and many functional non-coding RNAs. Pol II is the central component of the basal RNA polymerase II transcription machinery. It is composed of mobile elements that move relative to each other. RPB11 is part of the core element with the central large cleft. The protein is Probable DNA-directed RNA polymerase II subunit RPB11 of Plasmodium falciparum (isolate 3D7).